The following is a 347-amino-acid chain: O-methyltransferase aunE (347 aa).

Residue Trp-166 coordinates S-adenosyl-L-methionine. Residue His-265 is the Proton acceptor of the active site.

Belongs to the class I-like SAM-binding methyltransferase superfamily. Cation-independent O-methyltransferase family.

The protein operates within secondary metabolite biosynthesis. Its function is as follows. O-methyltransferase; part of the gene cluster that mediates the biosynthesis of aurasperone B, a dimeric gamma-naphthopyrone. The first step in the biosynthesis of aurasperone B is the production of gamma-naphthopyrone precursor YWA1 by the non-reducing polyketide synthase albA, via condensation of one acetyl-CoA starter unit with 6 malonyl-CoA units. YWA1 is then methylated by aunE at position C-6 to yield foncesin which is further methylated at position C-8 by aunD to produce fonsecin B. A key enzyme in the biosynthetic pathway is the cytochrome P450 monooxygenase aunB which catalyzes the oxidative dimerization of fonsecin B to aurasperone B. AunB also catalyzes the oxidative dimerization of rubrofusarin B into aurasperone A. The polypeptide is O-methyltransferase aunE (Aspergillus niger (strain ATCC 1015 / CBS 113.46 / FGSC A1144 / LSHB Ac4 / NCTC 3858a / NRRL 328 / USDA 3528.7)).